A 79-amino-acid polypeptide reads, in one-letter code: Protein OPG081 (79 aa).

Over Met1–Leu8 the chain is Intravirion. Residues Thr9 to Val29 traverse the membrane as a helical segment. Over Lys30 to Arg47 the chain is Virion surface. A helical membrane pass occupies residues Ala48–Tyr68. The Intravirion segment spans residues Ala69–Ser79.

It belongs to the orthopoxvirus OPG081 family.

The protein localises to the virion membrane. In terms of biological role, envelope protein. This Vaccinia virus (strain Copenhagen) (VACV) protein is Protein OPG081 (OPG081).